Consider the following 447-residue polypeptide: Phosphoglucosamine mutase (447 aa).

Ser-100 acts as the Phosphoserine intermediate in catalysis. Mg(2+) is bound by residues Ser-100, Asp-239, Asp-241, and Asp-243. A Phosphoserine modification is found at Ser-100.

This sequence belongs to the phosphohexose mutase family. Mg(2+) is required as a cofactor. Post-translationally, activated by phosphorylation.

The enzyme catalyses alpha-D-glucosamine 1-phosphate = D-glucosamine 6-phosphate. In terms of biological role, catalyzes the conversion of glucosamine-6-phosphate to glucosamine-1-phosphate. This chain is Phosphoglucosamine mutase, found in Dictyoglomus turgidum (strain DSM 6724 / Z-1310).